A 297-amino-acid polypeptide reads, in one-letter code: uncharacterized protein (297 aa).

A run of 4 helical transmembrane segments spans residues 3-23 (DYIY…LYML), 38-58 (VIHI…MPAL), 103-123 (IEGI…TALL), and 128-148 (YVFL…LLAM).

It is found in the cell membrane. This is an uncharacterized protein from Bacillus subtilis (strain 168).